Consider the following 257-residue polypeptide: tRNA (guanine-N(1)-)-methyltransferase (257 aa).

Residues Gly112 and 136–141 (LGDYVL) contribute to the S-adenosyl-L-methionine site.

The protein belongs to the RNA methyltransferase TrmD family. Homodimer.

It is found in the cytoplasm. The catalysed reaction is guanosine(37) in tRNA + S-adenosyl-L-methionine = N(1)-methylguanosine(37) in tRNA + S-adenosyl-L-homocysteine + H(+). Functionally, specifically methylates guanosine-37 in various tRNAs. The chain is tRNA (guanine-N(1)-)-methyltransferase from Salinispora tropica (strain ATCC BAA-916 / DSM 44818 / JCM 13857 / NBRC 105044 / CNB-440).